Consider the following 60-residue polypeptide: Temporin-CG1 (60 aa).

An N-terminal signal peptide occupies residues 1–22; it reads MFTLKKSLLLLFFLATINLSLC. Residues 23–43 constitute a propeptide, removed in mature form; that stretch reads EQERNAEEERRDDDERNAEVE.

Expressed by the skin glands.

Its subcellular location is the secreted. In terms of biological role, antimicrobial peptide active against a variety of Gram-positive and some Gram-negative bacterial strains. Has antifungal activity against a slime mold isolate. Has weak hemolytic activity against human erythrocytes. This chain is Temporin-CG1, found in Amolops chunganensis (Chungan torrent frog).